Consider the following 306-residue polypeptide: Ornithine carbamoyltransferase (306 aa).

Residues 51–54 (STRT), glutamine 78, arginine 102, and 129–132 (HPCQ) each bind carbamoyl phosphate. L-ornithine-binding positions include asparagine 160, aspartate 223, and 227–228 (SM). Residues 263 to 264 (CL) and arginine 291 contribute to the carbamoyl phosphate site.

The protein belongs to the aspartate/ornithine carbamoyltransferase superfamily. OTCase family.

Its subcellular location is the cytoplasm. The catalysed reaction is carbamoyl phosphate + L-ornithine = L-citrulline + phosphate + H(+). It functions in the pathway amino-acid biosynthesis; L-arginine biosynthesis; L-arginine from L-ornithine and carbamoyl phosphate: step 1/3. In terms of biological role, reversibly catalyzes the transfer of the carbamoyl group from carbamoyl phosphate (CP) to the N(epsilon) atom of ornithine (ORN) to produce L-citrulline. This chain is Ornithine carbamoyltransferase, found in Nostoc sp. (strain PCC 7120 / SAG 25.82 / UTEX 2576).